Reading from the N-terminus, the 815-residue chain is Probable AMP deaminase (815 aa).

A helical membrane pass occupies residues 5-27; it reads YALHLAVATLLGASFAAASAYYM. Disordered regions lie at residues 53–116 and 144–173; these read LLDA…PVPT and LLTNGTIGSDPLPGKASQNGDTKPVPSTNM. The segment covering 105–116 has biased composition (low complexity); sequence VRPTTPRSPVPT. Polar residues predominate over residues 159 to 173; sequence ASQNGDTKPVPSTNM. Positions 367 and 369 each coordinate Zn(2+). Substrate contacts are provided by residues H369 and 438–443; that span reads KFNLKY. Zn(2+) is bound at residue H635. E638 contributes to the substrate binding site. The Proton acceptor role is filled by H657. D712 serves as a coordination point for Zn(2+). A substrate-binding site is contributed by 713–716; the sequence is DPLQ.

It belongs to the metallo-dependent hydrolases superfamily. Adenosine and AMP deaminases family. As to quaternary structure, homodimer. Zn(2+) serves as cofactor.

It localises to the membrane. The catalysed reaction is AMP + H2O + H(+) = IMP + NH4(+). Its pathway is purine metabolism; IMP biosynthesis via salvage pathway; IMP from AMP: step 1/1. AMP deaminase plays a critical role in energy metabolism. This is Probable AMP deaminase (AMPD) from Oryza sativa subsp. japonica (Rice).